The primary structure comprises 294 residues: Nucleotide-binding protein CA_C0511 (294 aa).

ATP is bound at residue 8–15 (GLSGAGKT). Position 59–62 (59–62 (DIRG)) interacts with GTP.

This sequence belongs to the RapZ-like family.

Its function is as follows. Displays ATPase and GTPase activities. The polypeptide is Nucleotide-binding protein CA_C0511 (Clostridium acetobutylicum (strain ATCC 824 / DSM 792 / JCM 1419 / IAM 19013 / LMG 5710 / NBRC 13948 / NRRL B-527 / VKM B-1787 / 2291 / W)).